A 150-amino-acid polypeptide reads, in one-letter code: Putative antitoxin VapB45 (150 aa).

The segment at 124–150 is disordered; it reads AQRPVAAGRPRPRPQRPVSDRVSDQRR. The segment covering 141-150 has biased composition (basic and acidic residues); sequence VSDRVSDQRR.

The protein belongs to the phD/YefM antitoxin family.

Its function is as follows. Possibly the antitoxin component of a type II toxin-antitoxin (TA) system. Its cognate toxin is VapC45 (Potential). The protein is Putative antitoxin VapB45 (vapB45) of Mycobacterium tuberculosis (strain CDC 1551 / Oshkosh).